The primary structure comprises 351 residues: Dihydroorotate dehydrogenase (quinone) (351 aa).

FMN-binding positions include 67–71 and threonine 91; that span reads AGFDK. Lysine 71 lines the substrate pocket. 116–120 is a substrate binding site; it reads NAMGF. FMN contacts are provided by asparagine 145 and asparagine 178. Asparagine 178 contacts substrate. Catalysis depends on serine 181, which acts as the Nucleophile. Substrate is bound at residue asparagine 183. Residues lysine 214 and threonine 242 each contribute to the FMN site. Residue 243 to 244 coordinates substrate; that stretch reads NT. Residues glycine 262, glycine 291, and 312-313 each bind FMN; that span reads YS.

Belongs to the dihydroorotate dehydrogenase family. Type 2 subfamily. As to quaternary structure, monomer. FMN is required as a cofactor.

It localises to the cell membrane. It carries out the reaction (S)-dihydroorotate + a quinone = orotate + a quinol. It functions in the pathway pyrimidine metabolism; UMP biosynthesis via de novo pathway; orotate from (S)-dihydroorotate (quinone route): step 1/1. Its function is as follows. Catalyzes the conversion of dihydroorotate to orotate with quinone as electron acceptor. The chain is Dihydroorotate dehydrogenase (quinone) from Helicobacter acinonychis (strain Sheeba).